Here is a 443-residue protein sequence, read N- to C-terminus: Citrate transporter CitP (443 aa).

13 helical membrane-spanning segments follow: residues 27-47 (ISGIGLVRYAFMAVLLIIAIS), 59-79 (IFALVLMGHVFYYLGAHLPIF), 83-103 (LGGGSVFTILLTAILVATNVM), 114-134 (FINGMDFLGLYIVSLIASSLF), 151-171 (VAFISMALTAVVIGIVGVIIG), 177-197 (AILYIAMPIMAGGVGAGIVPL), 209-229 (SAGILSKLFPTVILGNLLAII), 268-288 (YVQLGVGLIIAVMFFMIGTML), 294-314 (GINAYAFIILSIVLTKAFGLL), 322-342 (VIMFGQVIVKNMTHALLAGVG), 350-370 (VLLAALSWQFVVLCLVSIVAI), 388-410 (AAITAGLANNSMGGTGNVAVLAA), and 422-442 (MGNRIGGALILVVAGILVTFM).

This sequence belongs to the 2-hydroxycarboxylate transporter (2-HCT) (TC 2.A.24) family.

It localises to the cell membrane. It catalyses the reaction (R)-lactate(in) + citrate(out) = (R)-lactate(out) + citrate(in). It carries out the reaction (S)-lactate(in) + citrate(out) = (S)-lactate(out) + citrate(in). The catalysed reaction is citrate(in) + H(+)(in) = citrate(out) + H(+)(out). Its activity is regulated as follows. Uptake of citrate is not affected by the absence or presence of Na(+) up to 25 mM and is increasingly inhibited by increasing Mg(2+) concentrations. In terms of biological role, secondary transporter involved in citrate metabolism. During cometabolism of citrate and glucose, catalyzes the uptake of divalent citrate into the cell coupled to the exit of monovalent lactate, a product of citrate fermentation during citrate-glucose cometabolism (precursor/product exchange). The citrate/lactate exchange is electrogenic and results in the generation of a membrane potential. In the absence of glucose, i.e. when no lactate is produced, CitP catalyzes the proton-dependent transport of citrate and malate. Transports the divalent form of citrate and malate with the concomitant uptake of one proton, therefore translocating a single unit of negative charge across the membrane. In vitro, transports a range of substrates that contain the 2-hydroxycarboxylate motif, HO-CR(2)-COO(-), with a preference for malate, citrate and monovalent 2-hydroxyisobutyrate. Modification of the OH or the COO(-) groups of the 2-hydroxycarboxylate motif drastically reduces the affinity of the transporter for the substrates, indicating their relevance in substrate recognition. Significant activity is also observed with some 2-oxocarboxylates and a 3-hydroxycarboxylate. This chain is Citrate transporter CitP, found in Leuconostoc mesenteroides subsp. mesenteroides.